The following is a 209-amino-acid chain: Large ribosomal subunit protein uL4 (209 aa).

The disordered stretch occupies residues 47 to 72 (TSSTKTRSEVRGSSKKPWKQKGTGRA). Positions 59 to 72 (SSKKPWKQKGTGRA) are enriched in basic residues.

The protein belongs to the universal ribosomal protein uL4 family. As to quaternary structure, part of the 50S ribosomal subunit.

Functionally, one of the primary rRNA binding proteins, this protein initially binds near the 5'-end of the 23S rRNA. It is important during the early stages of 50S assembly. It makes multiple contacts with different domains of the 23S rRNA in the assembled 50S subunit and ribosome. Its function is as follows. Forms part of the polypeptide exit tunnel. This chain is Large ribosomal subunit protein uL4, found in Borreliella burgdorferi (strain ZS7) (Borrelia burgdorferi).